Consider the following 429-residue polypeptide: Glycine betaine monooxygenase oxygenase subunit (429 aa).

A Rieske domain is found at 56 to 163; that stretch reads WLIAGMTCEI…VKTAGGYIFI (108 aa). Residues cysteine 98, histidine 100, cysteine 118, and histidine 121 each coordinate [2Fe-2S] cluster. Fe cation contacts are provided by histidine 217 and histidine 222.

The protein belongs to the bacterial ring-hydroxylating dioxygenase alpha subunit family. The system is composed of an oxygenase subunit (GbcA) and a reductase subunit (GbcB). It depends on [2Fe-2S] cluster as a cofactor. Fe cation is required as a cofactor.

The catalysed reaction is glycine betaine + NADH + O2 + H(+) = N,N-dimethylglycine + formaldehyde + NAD(+) + H2O. In terms of biological role, involved in degradation of glycine betaine. Part of a Rieske-type oxygenase system that catalyzes the conversion of glycine betaine (GB) to dimethylglycine (DMG). This subunit is the terminal oxygenase component of the system. This Pseudomonas aeruginosa (strain UCBPP-PA14) protein is Glycine betaine monooxygenase oxygenase subunit.